The sequence spans 427 residues: Succinate--CoA ligase [ADP-forming] subunit beta, mitochondrial (427 aa).

A mitochondrion-targeting transit peptide spans 1 to 30; sequence MYSRKSLSLISKCGQLSRLNAQAALQARRH. Residues 39 to 284 form the ATP-grasp domain; sequence AQLLREYGIG…LSQEDPDEVK (246 aa). ATP contacts are provided by residues K76 and 83-85; that span reads GRG. S102 is subject to Phosphoserine. E144 contributes to the ATP binding site. Mg(2+) contacts are provided by N236 and D253. 2 positions are modified to phosphoserine: S263 and S276. Residues N304 and 361–363 contribute to the substrate site; that span reads GIV.

Belongs to the succinate/malate CoA ligase beta subunit family. Heterodimer of an alpha and a beta subunit. It depends on Mg(2+) as a cofactor.

It localises to the mitochondrion. It catalyses the reaction succinate + ATP + CoA = succinyl-CoA + ADP + phosphate. It participates in carbohydrate metabolism; tricarboxylic acid cycle; succinate from succinyl-CoA (ligase route): step 1/1. Succinyl-CoA synthetase functions in the citric acid cycle (TCA), coupling the hydrolysis of succinyl-CoA to the synthesis of ATP and thus represents the only step of substrate-level phosphorylation in the TCA. The beta subunit provides nucleotide specificity of the enzyme and binds the substrate succinate, while the binding sites for coenzyme A and phosphate are found in the alpha subunit. This is Succinate--CoA ligase [ADP-forming] subunit beta, mitochondrial from Saccharomyces cerevisiae (strain ATCC 204508 / S288c) (Baker's yeast).